Consider the following 526-residue polypeptide: Protein spinster homolog 1 (526 aa).

The tract at residues 1-43 is disordered; the sequence is MTSRSSQGDAAPFLTQADNTEEEGAPDPGGHSSDEEEEEGKDH. Transmembrane regions (helical) follow at residues 48–68, 98–118, 126–146, 159–179, 187–207, 218–238, 272–292, 321–341, 355–375, 385–405, 419–439, and 463–483; these read HLLT…LFYI, GLVQ…FGYL, LIMC…SFVS, LVGV…ADLF, MLSF…IAGS, WALR…IFVA, FILS…LALW, MIFG…GVEI, LVCA…LAFA, FIFI…DILL, LQIV…IGVI, and MICA…ALFI.

Belongs to the major facilitator superfamily. Spinster (TC 2.A.1.49) family.

It localises to the lysosome membrane. The enzyme catalyses a 1-acyl-sn-glycero-3-phosphocholine(out) + H(+)(out) = a 1-acyl-sn-glycero-3-phosphocholine(in) + H(+)(in). It catalyses the reaction a 1-acyl-sn-glycero-3-phosphoethanolamine(out) + H(+)(out) = a 1-acyl-sn-glycero-3-phosphoethanolamine(in) + H(+)(in). It carries out the reaction a 1-O-(1Z-alkenyl)-sn-glycero-3-phosphocholine(out) + H(+)(out) = a 1-O-(1Z-alkenyl)-sn-glycero-3-phosphocholine(in) + H(+)(in). The catalysed reaction is a 1-O-(1Z-alkenyl)-sn-glycero-3-phosphoethanolamine(out) + H(+)(out) = a 1-O-(1Z-alkenyl)-sn-glycero-3-phosphoethanolamine(in) + H(+)(in). Functionally, mediates the rate-limiting, proton-dependent, lysosomal efflux of lysophospholipids. Selective for zwitterionic headgroups such as lysophosphatidylcholine (LPC) and lysophosphatidylethanolamine (LPE). Essential player in lysosomal homeostasis. The polypeptide is Protein spinster homolog 1 (spns1) (Xenopus tropicalis (Western clawed frog)).